We begin with the raw amino-acid sequence, 455 residues long: Squamosa promoter-binding-like protein 16 (455 aa).

An SBP-type zinc finger spans residues cysteine 115 to proline 192. 8 residues coordinate Zn(2+): cysteine 118, cysteine 123, cysteine 140, histidine 143, cysteine 159, cysteine 162, histidine 166, and cysteine 178. Residues lysine 175–lysine 191 carry the Bipartite nuclear localization signal motif. The interval leucine 182–alanine 204 is disordered.

Expressed in young panicles.

The protein resides in the nucleus. Trans-acting factor that binds specifically to the consensus nucleotide sequence 5'-TNCGTACAA-3'. May be involved in panicle development. In Oryza sativa subsp. japonica (Rice), this protein is Squamosa promoter-binding-like protein 16 (SPL16).